A 100-amino-acid polypeptide reads, in one-letter code: NADH-quinone oxidoreductase subunit K (100 aa).

The next 3 helical transmembrane spans lie at 4–24 (LTHG…GLVI), 28–48 (LLFM…AFVV), and 60–80 (VMYI…LALL).

This sequence belongs to the complex I subunit 4L family. NDH-1 is composed of 13 different subunits. Subunits NuoA, H, J, K, L, M, N constitute the membrane sector of the complex.

Its subcellular location is the cell inner membrane. It carries out the reaction a quinone + NADH + 5 H(+)(in) = a quinol + NAD(+) + 4 H(+)(out). Its function is as follows. NDH-1 shuttles electrons from NADH, via FMN and iron-sulfur (Fe-S) centers, to quinones in the respiratory chain. The immediate electron acceptor for the enzyme in this species is believed to be ubiquinone. Couples the redox reaction to proton translocation (for every two electrons transferred, four hydrogen ions are translocated across the cytoplasmic membrane), and thus conserves the redox energy in a proton gradient. This Enterobacter sp. (strain 638) protein is NADH-quinone oxidoreductase subunit K.